A 252-amino-acid polypeptide reads, in one-letter code: Thiazole synthase (252 aa).

The active-site Schiff-base intermediate with DXP is Lys98. Residues Gly159, 185 to 186 (AG), and 207 to 208 (AS) contribute to the 1-deoxy-D-xylulose 5-phosphate site.

It belongs to the ThiG family. As to quaternary structure, homotetramer. Forms heterodimers with either ThiH or ThiS.

It localises to the cytoplasm. The enzyme catalyses [ThiS sulfur-carrier protein]-C-terminal-Gly-aminoethanethioate + 2-iminoacetate + 1-deoxy-D-xylulose 5-phosphate = [ThiS sulfur-carrier protein]-C-terminal Gly-Gly + 2-[(2R,5Z)-2-carboxy-4-methylthiazol-5(2H)-ylidene]ethyl phosphate + 2 H2O + H(+). The protein operates within cofactor biosynthesis; thiamine diphosphate biosynthesis. Its function is as follows. Catalyzes the rearrangement of 1-deoxy-D-xylulose 5-phosphate (DXP) to produce the thiazole phosphate moiety of thiamine. Sulfur is provided by the thiocarboxylate moiety of the carrier protein ThiS. In vitro, sulfur can be provided by H(2)S. This Mycobacterium tuberculosis (strain ATCC 25177 / H37Ra) protein is Thiazole synthase.